Here is an 893-residue protein sequence, read N- to C-terminus: Ubiquitin-like protease 2 (893 aa).

Residues 538–800 (PVVLLVKDIK…YNLILQQADK (263 aa)) form a protease region. Catalysis depends on residues His644, Asp678, and Cys743.

The protein belongs to the peptidase C48 family.

The protein resides in the nucleus. Its subcellular location is the cytoplasm. The protein localises to the cytosol. Protease that catalyzes two essential functions in the smo-1 pathway: processing of full-length smo-1 to their mature forms and deconjugation of smo-1 from targeted proteins. May deconjugate smo-1 from the cadherin protein hmr-1 and plays a role in its recruitment to and the maintenance of adherens junctions. Required for epidermal morphogenesis during embryonic development. This is Ubiquitin-like protease 2 from Caenorhabditis elegans.